A 505-amino-acid polypeptide reads, in one-letter code: L-arabinose isomerase (505 aa).

4 residues coordinate Mn(2+): E310, E337, H354, and H453.

The protein belongs to the arabinose isomerase family. Requires Mn(2+) as cofactor.

The enzyme catalyses beta-L-arabinopyranose = L-ribulose. Its pathway is carbohydrate degradation; L-arabinose degradation via L-ribulose; D-xylulose 5-phosphate from L-arabinose (bacterial route): step 1/3. Functionally, catalyzes the conversion of L-arabinose to L-ribulose. The sequence is that of L-arabinose isomerase from Clavibacter sepedonicus (Clavibacter michiganensis subsp. sepedonicus).